The chain runs to 64 residues: Alpha-toxin Ts5 (64 aa).

The LCN-type CS-alpha/beta domain occupies 2–64; sequence KDGYPVEGDN…KEPTKTSGRC (63 aa). 4 disulfides stabilise this stretch: C12–C64, C16–C38, C24–C44, and C28–C46.

This sequence belongs to the long (4 C-C) scorpion toxin superfamily. Sodium channel inhibitor family. Alpha subfamily. As to expression, expressed by the venom gland.

The protein localises to the secreted. Functionally, alpha toxins bind voltage-independently at site-3 of sodium channels (Nav) and inhibit the inactivation of the activated channels, thereby blocking neuronal transmission. By extending the depolarized period it indirectly affects beta-cell voltage-dependent potassium channels, thus increasing potassium permeability. The protein is Alpha-toxin Ts5 of Tityus serrulatus (Brazilian scorpion).